Here is a 145-residue protein sequence, read N- to C-terminus: Cytochrome c-type biogenesis protein CcmE (145 aa).

At 1 to 7 (MKAKHQR) the chain is on the cytoplasmic side. Residues 8–28 (LILAVAALCGVAGAGVLAASA) traverse the membrane as a helical; Signal-anchor for type II membrane protein segment. The Periplasmic segment spans residues 29-145 (LRDEAAYFRT…PKNMKAAVEG (117 aa)). Heme contacts are provided by His-123 and Tyr-127.

Belongs to the CcmE/CycJ family.

The protein resides in the cell inner membrane. Its function is as follows. Heme chaperone required for the biogenesis of c-type cytochromes. Transiently binds heme delivered by CcmC and transfers the heme to apo-cytochromes in a process facilitated by CcmF and CcmH. The polypeptide is Cytochrome c-type biogenesis protein CcmE (Sphingopyxis alaskensis (strain DSM 13593 / LMG 18877 / RB2256) (Sphingomonas alaskensis)).